Reading from the N-terminus, the 337-residue chain is Ribosomal RNA small subunit methyltransferase H (337 aa).

Residues 45 to 47 (GGH), Asp-64, Phe-91, Asp-120, and Gln-127 each bind S-adenosyl-L-methionine.

It belongs to the methyltransferase superfamily. RsmH family.

It localises to the cytoplasm. The catalysed reaction is cytidine(1402) in 16S rRNA + S-adenosyl-L-methionine = N(4)-methylcytidine(1402) in 16S rRNA + S-adenosyl-L-homocysteine + H(+). Functionally, specifically methylates the N4 position of cytidine in position 1402 (C1402) of 16S rRNA. The chain is Ribosomal RNA small subunit methyltransferase H from Corynebacterium glutamicum (strain ATCC 13032 / DSM 20300 / JCM 1318 / BCRC 11384 / CCUG 27702 / LMG 3730 / NBRC 12168 / NCIMB 10025 / NRRL B-2784 / 534).